We begin with the raw amino-acid sequence, 94 residues long: MLKPLGDRVIIELVESEEKTASGIVLPDSAKEKPQEGKIVAAGSGRVLESGERVALEVNTGDRIIFSKYAGTEVKYEGKEYLILRESDILAVIG.

It belongs to the GroES chaperonin family. Heptamer of 7 subunits arranged in a ring. Interacts with the chaperonin GroEL.

The protein localises to the cytoplasm. Functionally, together with the chaperonin GroEL, plays an essential role in assisting protein folding. The GroEL-GroES system forms a nano-cage that allows encapsulation of the non-native substrate proteins and provides a physical environment optimized to promote and accelerate protein folding. GroES binds to the apical surface of the GroEL ring, thereby capping the opening of the GroEL channel. In Bacillus pumilus (strain SAFR-032), this protein is Co-chaperonin GroES.